The primary structure comprises 976 residues: Serine/threonine-protein kinase CLA4 (976 aa).

Residues 1–46 form a disordered region; sequence MTSIYTSDLKNHRRAPPPPNGAAGSGSGSSSGSGSGSGSGSGSGSL. The segment covering 23–43 has biased composition (gly residues); that stretch reads AGSGSGSSSGSGSGSGSGSGS. The 112-residue stretch at 73–184 folds into the PH domain; sequence SKRQSGWVHV…WLDAFTTKCP (112 aa). A disordered region spans residues 207-231; that stretch reads LTNGSLNGNSSSSPTSGLSSSSVLT. A CRIB domain is found at 237–250; the sequence is VSGPINFTHKVHVG. Disordered regions lie at residues 298–522 and 559–658; these read GGNS…KIHP and SKKS…QLKK. 2 stretches are compositionally biased toward low complexity: residues 313–332 and 371–411; these read NSKT…AKNN and LNGS…PLNN. Polar residues predominate over residues 430-440; that stretch reads SGTSSDTYSNK. The segment covering 441-455 has biased composition (basic and acidic residues); it reads NHQDRSGYEQQRQQR. Positions 456–487 are enriched in low complexity; the sequence is TDSSQQQQQQQKQHQYQQKSQQQQQQPLSSHQ. Residues 496 to 505 show a composition bias toward pro residues; it reads QVPPTLPSSG. The span at 559–583 shows a compositional bias: low complexity; the sequence is SKKSQQQLASKQPSPPSSQQQQQKP. Residues 622–635 are compositionally biased toward polar residues; that stretch reads NETSGVSKTPSPTD. The Protein kinase domain occupies 685–940; the sequence is FRIVEKAGQG…TDELLEHSFI (256 aa). Residues 691–699 and Lys715 contribute to the ATP site; that span reads AGQGASGNV. Asp808 serves as the catalytic Proton acceptor.

It belongs to the protein kinase superfamily. STE Ser/Thr protein kinase family. STE20 subfamily. As to quaternary structure, interacts (via the CRIB domain) with CDC42.

It carries out the reaction L-seryl-[protein] + ATP = O-phospho-L-seryl-[protein] + ADP + H(+). It catalyses the reaction L-threonyl-[protein] + ATP = O-phospho-L-threonyl-[protein] + ADP + H(+). Ser/Thr kinase required for wild-type filamentous growth, chlamydospore formation, and virulence in mouse systemic infection. This chain is Serine/threonine-protein kinase CLA4 (CLA4), found in Candida albicans (strain SC5314 / ATCC MYA-2876) (Yeast).